Consider the following 401-residue polypeptide: Glycerol-3-phosphate dehydrogenase [NAD(+)] 1 (401 aa).

Residues 40–45 (GSGNWG), phenylalanine 128, lysine 151, and alanine 184 each bind NAD(+). Substrate is bound at residue lysine 151. Lysine 244 functions as the Proton acceptor in the catalytic mechanism. NAD(+) contacts are provided by arginine 309 and glutamine 338. 309–310 (RN) lines the substrate pocket.

It belongs to the NAD-dependent glycerol-3-phosphate dehydrogenase family.

The protein localises to the cytoplasm. The catalysed reaction is sn-glycerol 3-phosphate + NAD(+) = dihydroxyacetone phosphate + NADH + H(+). This chain is Glycerol-3-phosphate dehydrogenase [NAD(+)] 1 (GPD1), found in Zygosaccharomyces rouxii.